A 158-amino-acid chain; its full sequence is Egg cell-secreted protein 1.1 (158 aa).

Residues 1-27 (MASKSSFMATFNIVTLMLMVASSTVTA) form the signal peptide. An N-linked (GlcNAc...) asparagine glycan is attached at Asn122.

The protein belongs to the plant egg cell-secreted peptide family. As to expression, restricted to female reproductive tissues, specifically accumulating in storage vesicles of the unfertilized egg cell.

The protein resides in the cytoplasmic vesicle. It is found in the secreted. Its function is as follows. Involved in the regulation of gamete interactions during the double fertilization and to prevent multiple-pollen tube attraction; mediates the redistribution of the gamete fusogen HAP2/GCS1 to the cell surface after secretion upon sperm arrival. The protein is Egg cell-secreted protein 1.1 (EC1.1) of Arabidopsis thaliana (Mouse-ear cress).